The chain runs to 419 residues: CinA-like protein (419 aa).

Belongs to the CinA family.

The sequence is that of CinA-like protein from Leptospira borgpetersenii serovar Hardjo-bovis (strain JB197).